The primary structure comprises 254 residues: Probable phosphomannomutase (254 aa).

Catalysis depends on Asp14, which acts as the Nucleophile. Asp14 and Asp16 together coordinate Mg(2+). Asp16 functions as the Proton donor/acceptor in the catalytic mechanism. Positions 23, 129, 140, 147, 185, and 187 each coordinate alpha-D-mannose 1-phosphate. Mg(2+) is bound by residues Asp214, Phe226, Asp228, and Thr231.

The protein belongs to the eukaryotic PMM family. Homodimer.

It localises to the cytoplasm. It catalyses the reaction alpha-D-mannose 1-phosphate = D-mannose 6-phosphate. Its pathway is nucleotide-sugar biosynthesis; GDP-alpha-D-mannose biosynthesis; alpha-D-mannose 1-phosphate from D-fructose 6-phosphate: step 2/2. Its function is as follows. Involved in the synthesis of the GDP-mannose and dolichol-phosphate-mannose required for a number of critical mannosyl transfer reactions. This is Probable phosphomannomutase from Caenorhabditis elegans.